The following is a 378-amino-acid chain: tRNA-specific 2-thiouridylase MnmA (378 aa).

ATP contacts are provided by residues 6-13 (AMSGGVDS) and L32. The Nucleophile role is filled by C101. Cysteines 101 and 199 form a disulfide. Residue G125 coordinates ATP. Residues 148 to 150 (KDQ) form an interaction with tRNA region. C199 functions as the Cysteine persulfide intermediate in the catalytic mechanism.

This sequence belongs to the MnmA/TRMU family.

The protein resides in the cytoplasm. It catalyses the reaction S-sulfanyl-L-cysteinyl-[protein] + uridine(34) in tRNA + AH2 + ATP = 2-thiouridine(34) in tRNA + L-cysteinyl-[protein] + A + AMP + diphosphate + H(+). Catalyzes the 2-thiolation of uridine at the wobble position (U34) of tRNA, leading to the formation of s(2)U34. In Micrococcus luteus (strain ATCC 4698 / DSM 20030 / JCM 1464 / CCM 169 / CCUG 5858 / IAM 1056 / NBRC 3333 / NCIMB 9278 / NCTC 2665 / VKM Ac-2230) (Micrococcus lysodeikticus), this protein is tRNA-specific 2-thiouridylase MnmA.